A 753-amino-acid polypeptide reads, in one-letter code: 5-methyltetrahydropteroyltriglutamate--homocysteine methyltransferase (753 aa).

Residues 17–20 (RELK) and lysine 117 each bind 5-methyltetrahydropteroyltri-L-glutamate. Residues 431–433 (IGS) and glutamate 484 contribute to the L-homocysteine site. L-methionine contacts are provided by residues 431-433 (IGS) and glutamate 484. Residues 515-516 (RC) and tryptophan 561 each bind 5-methyltetrahydropteroyltri-L-glutamate. Aspartate 599 serves as a coordination point for L-homocysteine. Residue aspartate 599 participates in L-methionine binding. Residue glutamate 605 coordinates 5-methyltetrahydropteroyltri-L-glutamate. Zn(2+)-binding residues include histidine 641, cysteine 643, and glutamate 665. Catalysis depends on histidine 694, which acts as the Proton donor. Cysteine 726 is a Zn(2+) binding site.

The protein belongs to the vitamin-B12 independent methionine synthase family. Requires Zn(2+) as cofactor.

The catalysed reaction is 5-methyltetrahydropteroyltri-L-glutamate + L-homocysteine = tetrahydropteroyltri-L-glutamate + L-methionine. It participates in amino-acid biosynthesis; L-methionine biosynthesis via de novo pathway; L-methionine from L-homocysteine (MetE route): step 1/1. Functionally, catalyzes the transfer of a methyl group from 5-methyltetrahydrofolate to homocysteine resulting in methionine formation. This chain is 5-methyltetrahydropteroyltriglutamate--homocysteine methyltransferase, found in Escherichia fergusonii (strain ATCC 35469 / DSM 13698 / CCUG 18766 / IAM 14443 / JCM 21226 / LMG 7866 / NBRC 102419 / NCTC 12128 / CDC 0568-73).